A 393-amino-acid chain; its full sequence is NAD(P)H-quinone oxidoreductase subunit H, chloroplastic (393 aa).

This sequence belongs to the complex I 49 kDa subunit family. As to quaternary structure, NDH is composed of at least 16 different subunits, 5 of which are encoded in the nucleus.

It is found in the plastid. Its subcellular location is the chloroplast thylakoid membrane. It carries out the reaction a plastoquinone + NADH + (n+1) H(+)(in) = a plastoquinol + NAD(+) + n H(+)(out). The catalysed reaction is a plastoquinone + NADPH + (n+1) H(+)(in) = a plastoquinol + NADP(+) + n H(+)(out). Its function is as follows. NDH shuttles electrons from NAD(P)H:plastoquinone, via FMN and iron-sulfur (Fe-S) centers, to quinones in the photosynthetic chain and possibly in a chloroplast respiratory chain. The immediate electron acceptor for the enzyme in this species is believed to be plastoquinone. Couples the redox reaction to proton translocation, and thus conserves the redox energy in a proton gradient. The polypeptide is NAD(P)H-quinone oxidoreductase subunit H, chloroplastic (Piper cenocladum (Ant piper)).